A 424-amino-acid chain; its full sequence is Serine--tRNA ligase (424 aa).

231–233 is an L-serine binding site; that stretch reads TAE. 262–264 is a binding site for ATP; that stretch reads RSE. Glu285 contributes to the L-serine binding site. ATP is bound at residue 349–352; that stretch reads EISS. Position 385 (Ser385) interacts with L-serine.

This sequence belongs to the class-II aminoacyl-tRNA synthetase family. Type-1 seryl-tRNA synthetase subfamily. In terms of assembly, homodimer. The tRNA molecule binds across the dimer.

It localises to the cytoplasm. It carries out the reaction tRNA(Ser) + L-serine + ATP = L-seryl-tRNA(Ser) + AMP + diphosphate + H(+). It catalyses the reaction tRNA(Sec) + L-serine + ATP = L-seryl-tRNA(Sec) + AMP + diphosphate + H(+). Its pathway is aminoacyl-tRNA biosynthesis; selenocysteinyl-tRNA(Sec) biosynthesis; L-seryl-tRNA(Sec) from L-serine and tRNA(Sec): step 1/1. Functionally, catalyzes the attachment of serine to tRNA(Ser). Is also able to aminoacylate tRNA(Sec) with serine, to form the misacylated tRNA L-seryl-tRNA(Sec), which will be further converted into selenocysteinyl-tRNA(Sec). The chain is Serine--tRNA ligase from Bacillus cereus (strain AH187).